The chain runs to 320 residues: MIAPVRWLSRKDVALVNLPFASALNIIEVTLRDHGNGAFENPPKIGIHPRHDALIHAMPGWLPTQRRAGLKWIATYSSNRSVGLPSITGLLVLNDPDTGLPVCVMDAAYLTAVRTAAASAVTSKYLSPSHVRKIAVIGAGIQGLYHVEMLSLVHPAAEFHIVDIDDDAVRLLAQMVRSKARIVPVKEAEIAIRTADVVVTATSQLEEVAFQFSWVKEGSLVLPVHPRGWSEDITTASEVLLADDVAQFASYIMALGSPYRDISRVLGSVSDVITGQVTGRANDSDRIAVFNLGIAVHDVAIGSAIFDIAEQLGLGTIVSY.

The protein belongs to the ornithine cyclodeaminase/mu-crystallin family.

Functionally, seems to be involved in the nodulation efficiency of R.meliloti GR4 on alfalfa roots. This Rhizobium meliloti (Ensifer meliloti) protein is Nodulation efficiency protein NfeD.